A 302-amino-acid chain; its full sequence is 4-hydroxy-tetrahydrodipicolinate synthase (302 aa).

Threonine 46 lines the pyruvate pocket. Tyrosine 134 serves as the catalytic Proton donor/acceptor. Residue lysine 162 is the Schiff-base intermediate with substrate of the active site. A pyruvate-binding site is contributed by valine 204.

Belongs to the DapA family. In terms of assembly, homotetramer; dimer of dimers.

The protein resides in the cytoplasm. It carries out the reaction L-aspartate 4-semialdehyde + pyruvate = (2S,4S)-4-hydroxy-2,3,4,5-tetrahydrodipicolinate + H2O + H(+). It participates in amino-acid biosynthesis; L-lysine biosynthesis via DAP pathway; (S)-tetrahydrodipicolinate from L-aspartate: step 3/4. Its function is as follows. Catalyzes the condensation of (S)-aspartate-beta-semialdehyde [(S)-ASA] and pyruvate to 4-hydroxy-tetrahydrodipicolinate (HTPA). This Xanthomonas campestris pv. campestris (strain ATCC 33913 / DSM 3586 / NCPPB 528 / LMG 568 / P 25) protein is 4-hydroxy-tetrahydrodipicolinate synthase.